The following is a 339-amino-acid chain: Glycerol-3-phosphate dehydrogenase [NAD(P)+] (339 aa).

Residues S11, W12, and K109 each coordinate NADPH. Sn-glycerol 3-phosphate-binding residues include K109, G140, and S142. Residue A144 coordinates NADPH. Positions 195, 249, 259, 260, and 261 each coordinate sn-glycerol 3-phosphate. The active-site Proton acceptor is the K195. R260 lines the NADPH pocket. Residues V284 and E286 each coordinate NADPH.

Belongs to the NAD-dependent glycerol-3-phosphate dehydrogenase family.

Its subcellular location is the cytoplasm. It catalyses the reaction sn-glycerol 3-phosphate + NAD(+) = dihydroxyacetone phosphate + NADH + H(+). It carries out the reaction sn-glycerol 3-phosphate + NADP(+) = dihydroxyacetone phosphate + NADPH + H(+). It functions in the pathway membrane lipid metabolism; glycerophospholipid metabolism. In terms of biological role, catalyzes the reduction of the glycolytic intermediate dihydroxyacetone phosphate (DHAP) to sn-glycerol 3-phosphate (G3P), the key precursor for phospholipid synthesis. This Lactobacillus helveticus (strain DPC 4571) protein is Glycerol-3-phosphate dehydrogenase [NAD(P)+].